The sequence spans 302 residues: Succinate--CoA ligase [ADP-forming] subunit alpha (302 aa).

CoA-binding positions include 17–20, Lys43, and 96–98; these read TGST and ITE. Tyr159 is a substrate binding site. The active-site Tele-phosphohistidine intermediate is His247.

This sequence belongs to the succinate/malate CoA ligase alpha subunit family. In terms of assembly, heterotetramer of two alpha and two beta subunits.

The catalysed reaction is succinate + ATP + CoA = succinyl-CoA + ADP + phosphate. The enzyme catalyses GTP + succinate + CoA = succinyl-CoA + GDP + phosphate. Its pathway is carbohydrate metabolism; tricarboxylic acid cycle; succinate from succinyl-CoA (ligase route): step 1/1. In terms of biological role, succinyl-CoA synthetase functions in the citric acid cycle (TCA), coupling the hydrolysis of succinyl-CoA to the synthesis of either ATP or GTP and thus represents the only step of substrate-level phosphorylation in the TCA. The alpha subunit of the enzyme binds the substrates coenzyme A and phosphate, while succinate binding and nucleotide specificity is provided by the beta subunit. The sequence is that of Succinate--CoA ligase [ADP-forming] subunit alpha from Staphylococcus epidermidis (strain ATCC 12228 / FDA PCI 1200).